A 185-amino-acid polypeptide reads, in one-letter code: Ribosome-recycling factor (185 aa).

This sequence belongs to the RRF family.

Its subcellular location is the cytoplasm. In terms of biological role, responsible for the release of ribosomes from messenger RNA at the termination of protein biosynthesis. May increase the efficiency of translation by recycling ribosomes from one round of translation to another. This Thioalkalivibrio sulfidiphilus (strain HL-EbGR7) protein is Ribosome-recycling factor.